The following is a 430-amino-acid chain: MKTTIKQAKDHLNQDVTIGAWLTNKRSSGKIAFLQLRDGTGFMQGVVVKSEVDEEVFKLAKEITQESSLYVTGTITEDNRSDLGYEMQVKSIEVISEAHDYPITPKNHGTEFLMDHRHLWLRSKKQHAVMKIRNEVIRATYEFFNKDGFTKVDPPILTASAPEGTSELFHTKYFDQDAFLSQSGQLYLEAAAMAHGKVFSFGPTFRAEKSKTRRHLIEFWMIEGEMAFTNHAESLEIQEQYVTHVVKSVLENCKLELKILERDTSKLEKVATPFPRISYDDAIEFLKAEGFDDIEWGEDFGAPHETAIANHYDLPVFITNYPTKIKPFYMQPNPENEETVLCADLIAPEGYGEIIGGSERVDDLELLEQRVKEHGLDEEAYSYYLDLRRYGSVPHCGFGLGLERTVAWISGVEHVRETAPFPRLLNRLYP.

It belongs to the class-II aminoacyl-tRNA synthetase family. As to quaternary structure, homodimer.

It is found in the cytoplasm. The enzyme catalyses tRNA(Asn) + L-asparagine + ATP = L-asparaginyl-tRNA(Asn) + AMP + diphosphate + H(+). This chain is Asparagine--tRNA ligase, found in Staphylococcus aureus (strain USA300).